The following is a 494-amino-acid chain: Cobyric acid synthase (494 aa).

Residues 249–443 (EINVTILRLP…LHGIFDNGAW (195 aa)) enclose the GATase cobBQ-type domain. Cysteine 330 functions as the Nucleophile in the catalytic mechanism. Histidine 435 is a catalytic residue.

Belongs to the CobB/CobQ family. CobQ subfamily.

It functions in the pathway cofactor biosynthesis; adenosylcobalamin biosynthesis. In terms of biological role, catalyzes amidations at positions B, D, E, and G on adenosylcobyrinic A,C-diamide. NH(2) groups are provided by glutamine, and one molecule of ATP is hydrogenolyzed for each amidation. The sequence is that of Cobyric acid synthase from Crocosphaera subtropica (strain ATCC 51142 / BH68) (Cyanothece sp. (strain ATCC 51142)).